A 74-amino-acid polypeptide reads, in one-letter code: Kappa-scoloptoxin(07)-Ssm2a (74 aa).

A signal peptide spans 1 to 19 (MLVFYALLFVTVFSNTVMG). Residues 20–41 (ATIDKPIPKPILREAIEEIEVN) constitute a propeptide that is removed on maturation.

It belongs to the scoloptoxin-07 family. Post-translationally, contains 3 disulfide bonds. As to expression, expressed by the venom gland.

Its subcellular location is the secreted. Its function is as follows. Toxin that inhibits voltage-gated potassium channel currents in DRG neurons (IC(50)=about 570 nM). In vivo, induces neurotoxicity shown by twitching, paralysis, and body contraction. In vivo, insects injected with this toxin showed signs of neurotoxicity including twitching, paralysis, and body contraction. The sequence is that of Kappa-scoloptoxin(07)-Ssm2a from Scolopendra mutilans (Chinese red-headed centipede).